Consider the following 376-residue polypeptide: Queuine tRNA-ribosyltransferase (376 aa).

Asp-89 (proton acceptor) is an active-site residue. Residues 89 to 93 (DSGGF), Asp-143, Gln-194, and Gly-221 each bind substrate. An RNA binding region spans residues 252 to 258 (GVGIPSN). The Nucleophile role is filled by Asp-271. The segment at 276 to 280 (ARNGR) is RNA binding; important for wobble base 34 recognition. Zn(2+) is bound by residues Cys-309, Cys-311, Cys-314, and His-340.

It belongs to the queuine tRNA-ribosyltransferase family. Homodimer. Within each dimer, one monomer is responsible for RNA recognition and catalysis, while the other monomer binds to the replacement base PreQ1. Zn(2+) is required as a cofactor.

The catalysed reaction is 7-aminomethyl-7-carbaguanine + guanosine(34) in tRNA = 7-aminomethyl-7-carbaguanosine(34) in tRNA + guanine. It participates in tRNA modification; tRNA-queuosine biosynthesis. Its function is as follows. Catalyzes the base-exchange of a guanine (G) residue with the queuine precursor 7-aminomethyl-7-deazaguanine (PreQ1) at position 34 (anticodon wobble position) in tRNAs with GU(N) anticodons (tRNA-Asp, -Asn, -His and -Tyr). Catalysis occurs through a double-displacement mechanism. The nucleophile active site attacks the C1' of nucleotide 34 to detach the guanine base from the RNA, forming a covalent enzyme-RNA intermediate. The proton acceptor active site deprotonates the incoming PreQ1, allowing a nucleophilic attack on the C1' of the ribose to form the product. After dissociation, two additional enzymatic reactions on the tRNA convert PreQ1 to queuine (Q), resulting in the hypermodified nucleoside queuosine (7-(((4,5-cis-dihydroxy-2-cyclopenten-1-yl)amino)methyl)-7-deazaguanosine). The polypeptide is Queuine tRNA-ribosyltransferase (Clostridium botulinum (strain Kyoto / Type A2)).